We begin with the raw amino-acid sequence, 208 residues long: RNA chaperone ProQ (208 aa).

Residues 106 to 127 are compositionally biased toward basic and acidic residues; it reads SKAKVATRRKEQAKKAREEAKA. The segment at 106–154 is disordered; that stretch reads SKAKVATRRKEQAKKAREEAKAKKTARAATPPKRRPQPAAKKVEQPVET.

This sequence belongs to the ProQ family.

It is found in the cytoplasm. In terms of biological role, RNA chaperone with significant RNA binding, RNA strand exchange and RNA duplexing activities. The sequence is that of RNA chaperone ProQ from Aliivibrio fischeri (strain ATCC 700601 / ES114) (Vibrio fischeri).